We begin with the raw amino-acid sequence, 82 residues long: Small ribosomal subunit protein bS16 (82 aa).

It belongs to the bacterial ribosomal protein bS16 family.

The protein is Small ribosomal subunit protein bS16 of Erwinia tasmaniensis (strain DSM 17950 / CFBP 7177 / CIP 109463 / NCPPB 4357 / Et1/99).